Here is a 422-residue protein sequence, read N- to C-terminus: UPF0761 membrane protein LHK_02978 (422 aa).

A run of 6 helical transmembrane segments spans residues 44-64, 102-122, 141-161, 178-198, 212-232, and 246-266; these read LLSL…FPVF, LTAV…LTID, MLVY…GISG, LAGI…LTVL, ALIG…GFGL, and AFAT…TVLI.

It belongs to the UPF0761 family.

Its subcellular location is the cell inner membrane. This chain is UPF0761 membrane protein LHK_02978, found in Laribacter hongkongensis (strain HLHK9).